The primary structure comprises 307 residues: tRNA pseudouridine synthase B (307 aa).

Residue D38 is the Nucleophile of the active site.

The protein belongs to the pseudouridine synthase TruB family. Type 1 subfamily.

The catalysed reaction is uridine(55) in tRNA = pseudouridine(55) in tRNA. Functionally, responsible for synthesis of pseudouridine from uracil-55 in the psi GC loop of transfer RNAs. This is tRNA pseudouridine synthase B from Bacillus anthracis.